Here is a 567-residue protein sequence, read N- to C-terminus: Probable serine/threonine-protein kinase WNK6 (567 aa).

Residues 28–285 (IRYKEVIGKG…AKELLLDPFL (258 aa)) form the Protein kinase domain. Residues 108–111 (TELF) and Lys158 each bind ATP. Asp175 (proton acceptor) is an active-site residue. The span at 499–509 (VDATKGEDKSS) shows a compositional bias: basic and acidic residues. Residues 499 to 528 (VDATKGEDKSSIQEVEEATEPVSLEEEERL) are disordered. A compositionally biased stretch (acidic residues) spans 512 to 525 (EVEEATEPVSLEEE). A coiled-coil region spans residues 519 to 553 (PVSLEEEERLRQELEEIEAKYQEDMKEIATKREEA).

The protein belongs to the protein kinase superfamily. Ser/Thr protein kinase family. WNK subfamily.

It carries out the reaction L-seryl-[protein] + ATP = O-phospho-L-seryl-[protein] + ADP + H(+). The catalysed reaction is L-threonyl-[protein] + ATP = O-phospho-L-threonyl-[protein] + ADP + H(+). Its function is as follows. May regulate flowering time by modulating the photoperiod pathway. In Arabidopsis thaliana (Mouse-ear cress), this protein is Probable serine/threonine-protein kinase WNK6 (WNK6).